The primary structure comprises 368 residues: Quinolinate synthase (368 aa).

His-46 and Ser-63 together coordinate iminosuccinate. Cys-110 is a binding site for [4Fe-4S] cluster. Residues 141–143 (YVN) and Ser-162 contribute to the iminosuccinate site. Cys-230 provides a ligand contact to [4Fe-4S] cluster. Iminosuccinate is bound by residues 256-258 (HPE) and Thr-273. Residue Cys-320 participates in [4Fe-4S] cluster binding.

This sequence belongs to the quinolinate synthase family. Type 3 subfamily. [4Fe-4S] cluster is required as a cofactor.

It is found in the cytoplasm. The catalysed reaction is iminosuccinate + dihydroxyacetone phosphate = quinolinate + phosphate + 2 H2O + H(+). It participates in cofactor biosynthesis; NAD(+) biosynthesis; quinolinate from iminoaspartate: step 1/1. In terms of biological role, catalyzes the condensation of iminoaspartate with dihydroxyacetone phosphate to form quinolinate. The protein is Quinolinate synthase of Bacillus cereus (strain ATCC 10987 / NRS 248).